A 2569-amino-acid chain; its full sequence is Highly reducing polyketide synthase pks5 (2569 aa).

Positions 1 to 25 (MVVKFANGVRNRGNGDEGQRGTQRP) are disordered. In terms of domain architecture, Ketosynthase family 3 (KS3) spans 27-452 (STPIAIVGMS…GTNVHVIMEA (426 aa)). Residues C200, H335, and H375 each act as for beta-ketoacyl synthase activity in the active site. The malonyl-CoA:ACP transacylase (MAT) domain stretch occupies residues 572 to 892 (IFNGQGAQWY…PYLSCLRRNI (321 aa)). Residues 960-1097 (HELLGSSVPG…GYVSAEDSSK (138 aa)) form an N-terminal hotdog fold region. The dehydratase (DH) domain stretch occupies residues 960–1268 (HELLGSSVPG…LRLQKIQAED (309 aa)). A PKS/mFAS DH domain is found at 960–1270 (HELLGSSVPG…LQKIQAEDDN (311 aa)). H992 (proton acceptor; for dehydratase activity) is an active-site residue. A C-terminal hotdog fold region spans residues 1117–1270 (RVRHVRPDAM…LQKIQAEDDN (154 aa)). D1179 acts as the Proton donor; for dehydratase activity in catalysis. The segment at 1457–1567 (LEVGAGTGGA…RKLLKPKGKL (111 aa)) is methyltransferase (CMet) domain. Residues 1855–2170 (DLLNKIEFLE…SGTHMGKIVL (316 aa)) form an enoyl reductase (ER) domain region. The tract at residues 2195 to 2371 (THLIVGGLRG…AISINLGPVD (177 aa)) is ketoreductase (KR) domain. Positions 2485–2562 (AARKLVSELI…DFAALVASRS (78 aa)) constitute a Carrier domain. The residue at position 2522 (S2522) is an O-(pantetheine 4'-phosphoryl)serine.

Highly reducing polyketide synthase; part of the gene cluster that mediates the biosynthesis of abscisic acid (ABA), a phytohormone that acts antagonistically toward salicylic acid (SA), jasmonic acid (JA) and ethylene (ETH) signaling, to impede plant defense responses. The first step of the pathway catalyzes the reaction from farnesyl diphosphate to alpha-ionylideneethane performed by the alpha-ionylideneethane synthase abl3 via a three-step reaction mechanism involving 2 neutral intermediates, beta-farnesene and allofarnesene. The cytochrome P450 monooxygenase abl1 might then be involved in the conversion of alpha-ionylideneethane to alpha-ionylideneacetic acid. Alpha-ionylideneacetic acid is further converted to abscisic acid in 2 steps involving the cytochrome P450 monooxygenase abl2 and the short-chain dehydrogenase/reductase abl4, via the intermediates 1'-deoxy-ABA or 1',4'-trans-diol-ABA, depending on the order of action of these 2 enzymes. Abl2 is responsible for the hydroxylation of carbon atom C-1' and abl4 might be involved in the oxidation of the C-4' carbon atom. Pks5 is clearly not involved in the production of ABA. Nonetheless, the possibility cannot be excluded that pks5 may modify ABA into another compound. It also cannot be excluded the possibility that pks5 also has a function completely independent of ABA synthesis. Pks5 is not required for pathogenicity on B.napus cotyledon. The chain is Highly reducing polyketide synthase pks5 from Leptosphaeria maculans (strain JN3 / isolate v23.1.3 / race Av1-4-5-6-7-8) (Blackleg fungus).